The sequence spans 108 residues: Flagellar hook-basal body complex protein FliE (108 aa).

Belongs to the FliE family.

The protein resides in the bacterial flagellum basal body. The protein is Flagellar hook-basal body complex protein FliE of Pseudomonas fluorescens (strain ATCC BAA-477 / NRRL B-23932 / Pf-5).